We begin with the raw amino-acid sequence, 481 residues long: Aspartyl/glutamyl-tRNA(Asn/Gln) amidotransferase subunit B (481 aa).

It belongs to the GatB/GatE family. GatB subfamily. In terms of assembly, heterotrimer of A, B and C subunits.

The enzyme catalyses L-glutamyl-tRNA(Gln) + L-glutamine + ATP + H2O = L-glutaminyl-tRNA(Gln) + L-glutamate + ADP + phosphate + H(+). It carries out the reaction L-aspartyl-tRNA(Asn) + L-glutamine + ATP + H2O = L-asparaginyl-tRNA(Asn) + L-glutamate + ADP + phosphate + 2 H(+). Functionally, allows the formation of correctly charged Asn-tRNA(Asn) or Gln-tRNA(Gln) through the transamidation of misacylated Asp-tRNA(Asn) or Glu-tRNA(Gln) in organisms which lack either or both of asparaginyl-tRNA or glutaminyl-tRNA synthetases. The reaction takes place in the presence of glutamine and ATP through an activated phospho-Asp-tRNA(Asn) or phospho-Glu-tRNA(Gln). This is Aspartyl/glutamyl-tRNA(Asn/Gln) amidotransferase subunit B from Pseudomonas syringae pv. syringae (strain B728a).